The primary structure comprises 142 residues: Large ribosomal subunit protein bL21 (142 aa).

Residues 73–84 show a composition bias toward basic residues; the sequence is KRRRQNSKRTRG. The disordered stretch occupies residues 73 to 142; the sequence is KRRRQNSKRT…KAAAKAESAE (70 aa). Residues 107-125 show a composition bias toward basic and acidic residues; the sequence is KAAEKKAPKADAAEGEAAK. A compositionally biased stretch (basic residues) spans 126-135; it reads PKKAAPKKAA.

Belongs to the bacterial ribosomal protein bL21 family. Part of the 50S ribosomal subunit. Contacts protein L20.

Functionally, this protein binds to 23S rRNA in the presence of protein L20. In Brucella canis (strain ATCC 23365 / NCTC 10854 / RM-666), this protein is Large ribosomal subunit protein bL21.